The following is a 167-amino-acid chain: NADH-ubiquinone oxidoreductase chain 4 (167 aa).

3 consecutive transmembrane segments (helical) span residues 2–22 (FIGA…LFCL), 44–64 (LLPL…ALPP), and 86–106 (IILV…MLIM).

Belongs to the complex I subunit 4 family.

The protein localises to the mitochondrion membrane. The enzyme catalyses a ubiquinone + NADH + 5 H(+)(in) = a ubiquinol + NAD(+) + 4 H(+)(out). Core subunit of the mitochondrial membrane respiratory chain NADH dehydrogenase (Complex I) that is believed to belong to the minimal assembly required for catalysis. Complex I functions in the transfer of electrons from NADH to the respiratory chain. The immediate electron acceptor for the enzyme is believed to be ubiquinone. The polypeptide is NADH-ubiquinone oxidoreductase chain 4 (MT-ND4) (Carlito syrichta (Philippine tarsier)).